An 876-amino-acid polypeptide reads, in one-letter code: Bifunctional uridylyltransferase/uridylyl-removing enzyme (876 aa).

Residues 1–332 (MPYQSPITFQ…NNGEEAEAVI (332 aa)) form a uridylyltransferase region. The segment at 333-692 (IDDDFQRRGN…LSKKATRGGT (360 aa)) is uridylyl-removing. An HD domain is found at 451–573 (VDEHSIRLLK…VRDEERLEYL (123 aa)). 2 ACT domains span residues 693–777 (EVFI…RIPR) and 800–876 (LMEF…PSAQ).

It belongs to the GlnD family. Requires Mg(2+) as cofactor.

The enzyme catalyses [protein-PII]-L-tyrosine + UTP = [protein-PII]-uridylyl-L-tyrosine + diphosphate. It catalyses the reaction [protein-PII]-uridylyl-L-tyrosine + H2O = [protein-PII]-L-tyrosine + UMP + H(+). With respect to regulation, uridylyltransferase (UTase) activity is inhibited by glutamine, while glutamine activates uridylyl-removing (UR) activity. Modifies, by uridylylation and deuridylylation, the PII regulatory proteins (GlnB and homologs), in response to the nitrogen status of the cell that GlnD senses through the glutamine level. Under low glutamine levels, catalyzes the conversion of the PII proteins and UTP to PII-UMP and PPi, while under higher glutamine levels, GlnD hydrolyzes PII-UMP to PII and UMP (deuridylylation). Thus, controls uridylylation state and activity of the PII proteins, and plays an important role in the regulation of nitrogen assimilation and metabolism. The protein is Bifunctional uridylyltransferase/uridylyl-removing enzyme of Vibrio cholerae serotype O1 (strain ATCC 39315 / El Tor Inaba N16961).